We begin with the raw amino-acid sequence, 947 residues long: Zinc finger protein 268 (947 aa).

Positions 81–152 constitute a KRAB domain; that stretch reads LSFMDVFVDF…QAQVPNQTCP (72 aa). The residue at position 178 (S178) is a Phosphoserine; by TBK1. 24 C2H2-type zinc fingers span residues 276 to 298, 304 to 326, 332 to 354, 360 to 382, 388 to 410, 416 to 438, 444 to 466, 472 to 494, 500 to 522, 528 to 550, 556 to 578, 584 to 606, 612 to 634, 640 to 662, 668 to 690, 696 to 718, 724 to 746, 752 to 774, 780 to 802, 808 to 830, 836 to 858, 864 to 886, 892 to 914, and 920 to 942; these read FGCSCCEKAFSSKSYLLVHQQTH, YGCNECGKDFSSKSYLIVHQRIH, HECSECRKTFSFHSQLVIHQRIH, YECCECGKVFSRKDQLVSHQKTH, YVCNECGKAFGLKSQLIIHERIH, YECNECQKAFNTKSNLMVHQRTH, YVCSDCGKAFTFKSQLIVHQGIH, YGCIQCGKGFSLKSQLIVHQRSH, YVCNECGKAFRSKSYLIIHTRTH, HECNNCGKAFSFKSQLIIHQRIH, YECHECGKAFSRKYQLISHQRTH, YECTDCGKAFGLKSQLIIHQRTH, FECSECQKAFNTKSNLIVHQRTH, YSCNECGKAFTFKSQLIVHKGVH, YGCSQCAKTFSLKSQLIVHQRSH, YGCSECGKAFRSKSYLIIHMRTH, HECRECGKSFSFNSQLIVHQRIH, YECSECGKAFNRKDQLISHQRTH, YGCSECGKAFSSKSYLIIHMRTH, YECNECGKAFIWKSLLIVHERTH, YKCSQCEKSFSGKLRLLVHQRMH, YECSECGKAFIRNSQLIVHQRTH, YGCNECGKTFSQKSILSAHQRTH, and CKCTECGKAFCWKSQLIMHQRTH.

Belongs to the krueppel C2H2-type zinc-finger protein family. Interacts (via the KRAB domain) with TRIM28 (via the RBCC domain); the interaction increases ZNF268 nuclear localization activity. Isoform 2 interacts with CHUK and IKBKB; the interaction is further increased in a TNF-alpha-dependent manner. Interacts with TOLLIP; this interaction is impaired by ZNF268 phosphorylation at Ser-178. Forms a ternary complex with TBK1 and SETD4; the interaction between SETD4 and TBK1 is ZNF268-dependent and leads to TBK1 monomethylation. In terms of processing, phosphorylation at Ser-178 stabilizes the protein by interfering with its binding to TOLLIP, hence impairing its degradation by Tollip-mediated selective autophagy system. Overexpressed in ovarian cancer tissues compared to normal ovarian tissues. Isoform 1 and isoform 2 are expressed in squamous epithelium tissues. Isoform 2 is overexpressed in squamous cervical cancer (at protein level). Expressed in blood cells. Isoform 1 is expressed in pancreas, lung, skeletal muscle, heart, placenta, liver, kidney and brain. Isoform 2 expressed in chronic lymphocytic leukemia (CLL) and several tumor cell lines. Isoform 3 is expressed in several tumor cells. Isoform 5 is expressed in fetal liver and several tumor cells. Isoform 6 is weakly expressed in brain, lung amd small intestin and in several tumor cells. Isoform 7 is expressed in fetal liver and several tumor cells.

The protein localises to the nucleus. The protein resides in the cytoplasm. In terms of biological role, acts as a transcriptional repressor. Inhibits erythroid differentiation and tumor cell proliferation. Plays a role during ovarian cancer development and progression. Functionally, contributes to cervical carcinogenesis in part through the TNF-alpha-induced NF-kappa-B signaling pathway by interacting with the I-kappa-B-kinase (IKK) core complex. Involved in the regulation of antiviral interferon signaling. During viral infection, recruits SETD4 to TBK1, leading to TBK1 monomethylation, which is critical for the assembly of TBK1 complex and IRF3 signaling. This Homo sapiens (Human) protein is Zinc finger protein 268 (ZNF268).